A 201-amino-acid polypeptide reads, in one-letter code: Large ribosomal subunit protein uL4 (201 aa).

The disordered stretch occupies residues 46–71; the sequence is QKTRAEVVGSGKKPWRQKGTGRARAG.

This sequence belongs to the universal ribosomal protein uL4 family. Part of the 50S ribosomal subunit.

Its function is as follows. One of the primary rRNA binding proteins, this protein initially binds near the 5'-end of the 23S rRNA. It is important during the early stages of 50S assembly. It makes multiple contacts with different domains of the 23S rRNA in the assembled 50S subunit and ribosome. Forms part of the polypeptide exit tunnel. This is Large ribosomal subunit protein uL4 from Shewanella piezotolerans (strain WP3 / JCM 13877).